The primary structure comprises 148 residues: Glutaredoxin-C10 (148 aa).

The tract at residues 16-55 (TLDLTVHPPPPPPLPPPAPSTVSSSTASTSLSFDEEETSE) is disordered. The span at 22–34 (HPPPPPPLPPPAP) shows a compositional bias: pro residues. Over residues 35–47 (STVSSSTASTSLS) the composition is skewed to low complexity. Positions 55 to 147 (ESKIGRLISE…PRLVEVGALW (93 aa)) constitute a Glutaredoxin domain. Cysteines 76 and 79 form a disulfide.

Belongs to the glutaredoxin family. CC-type subfamily.

It localises to the cytoplasm. Has a glutathione-disulfide oxidoreductase activity in the presence of NADPH and glutathione reductase. Reduces low molecular weight disulfides and proteins. The polypeptide is Glutaredoxin-C10 (GRXC10) (Arabidopsis thaliana (Mouse-ear cress)).